Consider the following 300-residue polypeptide: Ribosomal protein bS6--L-glutamate ligase (300 aa).

Residues 104–287 enclose the ATP-grasp domain; it reads MQLLARQGID…IAGKMIRWIE (184 aa). ATP is bound by residues lysine 141, 178 to 179, aspartate 187, and 211 to 213; these read EY and RSN. Mg(2+) contacts are provided by aspartate 248, glutamate 260, and asparagine 262. 3 residues coordinate Mn(2+): aspartate 248, glutamate 260, and asparagine 262.

This sequence belongs to the RimK family. Requires Mg(2+) as cofactor. Mn(2+) serves as cofactor.

Its function is as follows. An L-glutamate ligase that catalyzes the ATP-dependent post-translational addition of glutamate residues to the C-terminus of ribosomal protein bS6 (RpsF). Is also able to catalyze the synthesis of poly-alpha-glutamate in vitro, via ATP hydrolysis from unprotected glutamate as substrate. The number of glutamate residues added to either RpsF or to poly-alpha-glutamate changes with pH. In Escherichia coli O7:K1 (strain IAI39 / ExPEC), this protein is Ribosomal protein bS6--L-glutamate ligase.